The following is a 580-amino-acid chain: Amino-acid acetyltransferase, mitochondrial (580 aa).

The N-acetyltransferase domain maps to 403–560; sequence LTMQNLFDDK…NPRHKNGVVN (158 aa).

Belongs to the acetyltransferase family.

It localises to the mitochondrion. The catalysed reaction is L-glutamate + acetyl-CoA = N-acetyl-L-glutamate + CoA + H(+). Its pathway is amino-acid biosynthesis; L-arginine biosynthesis; N(2)-acetyl-L-ornithine from L-glutamate: step 1/4. Its function is as follows. N-acetylglutamate synthase involved in arginine biosynthesis. The protein is Amino-acid acetyltransferase, mitochondrial (ARG2) of Candida dubliniensis (strain CD36 / ATCC MYA-646 / CBS 7987 / NCPF 3949 / NRRL Y-17841) (Yeast).